The chain runs to 94 residues: Co-chaperonin GroES (94 aa).

This sequence belongs to the GroES chaperonin family. As to quaternary structure, heptamer of 7 subunits arranged in a ring. Interacts with the chaperonin GroEL.

Its subcellular location is the cytoplasm. Functionally, together with the chaperonin GroEL, plays an essential role in assisting protein folding. The GroEL-GroES system forms a nano-cage that allows encapsulation of the non-native substrate proteins and provides a physical environment optimized to promote and accelerate protein folding. GroES binds to the apical surface of the GroEL ring, thereby capping the opening of the GroEL channel. The polypeptide is Co-chaperonin GroES (Enterococcus faecalis (strain ATCC 700802 / V583)).